Reading from the N-terminus, the 406-residue chain is Tryptophan synthase beta chain (406 aa).

An N6-(pyridoxal phosphate)lysine modification is found at lysine 99.

This sequence belongs to the TrpB family. Tetramer of two alpha and two beta chains. The cofactor is pyridoxal 5'-phosphate.

The enzyme catalyses (1S,2R)-1-C-(indol-3-yl)glycerol 3-phosphate + L-serine = D-glyceraldehyde 3-phosphate + L-tryptophan + H2O. Its pathway is amino-acid biosynthesis; L-tryptophan biosynthesis; L-tryptophan from chorismate: step 5/5. In terms of biological role, the beta subunit is responsible for the synthesis of L-tryptophan from indole and L-serine. The sequence is that of Tryptophan synthase beta chain from Brucella canis (strain ATCC 23365 / NCTC 10854 / RM-666).